The primary structure comprises 703 residues: Prolyl 3-hydroxylase 2 (703 aa).

Positions 1–21 (MRESTWVSLLLLLLLPAPQRG) are cleaved as a signal peptide. The interval 18 to 40 (PQRGGPQDGRGSPEPEPERGPLQ) is disordered. TPR repeat units lie at residues 42–75 (FDLLYASGVAAYYSGDYEGAVRDLEAALRSHRRL), 144–177 (RVPYNYLQRAYIKLNQLDKAMEAAHTFFMANPEH), 205–238 (HLESYNAGVKHYEADDFEAAIKYFEQALREYFNE), and 301–334 (PLHYDYLQFAYYRVGEYVKALECAKAYLMFHPDD). N-linked (GlcNAc...) asparagine glycans are attached at residues asparagine 444, asparagine 455, and asparagine 544. The 115-residue stretch at 552 to 666 (THMVCRTALS…RCAVALWFTL (115 aa)) folds into the Fe2OG dioxygenase domain. Positions 575, 577, and 647 each coordinate Fe cation. The active site involves arginine 657. Positions 700 to 703 (KDEL) match the Prevents secretion from ER motif.

It belongs to the leprecan family. Fe cation serves as cofactor. The cofactor is L-ascorbate. Detected at low levels in cartilage.

The protein resides in the endoplasmic reticulum. It localises to the sarcoplasmic reticulum. Its subcellular location is the golgi apparatus. It catalyses the reaction L-prolyl-[collagen] + 2-oxoglutarate + O2 = trans-3-hydroxy-L-prolyl-[collagen] + succinate + CO2. Its function is as follows. Prolyl 3-hydroxylase that catalyzes the post-translational formation of 3-hydroxyproline on collagens. Contributes to proline 3-hydroxylation of collagen COL4A1 and COL1A1 in tendons, the eye sclera and in the eye lens capsule. Has high activity with the type IV collagen COL4A1, and lower activity with COL1A1. Catalyzes hydroxylation of the first Pro in Gly-Pro-Hyp sequences where Hyp is 4-hydroxyproline. Has no activity on substrates that lack 4-hydroxyproline in the third position. The protein is Prolyl 3-hydroxylase 2 of Rattus norvegicus (Rat).